The sequence spans 1060 residues: DNA topoisomerase 1 (1060 aa).

A Toprim domain is found at 1-141; sequence MILVIAEKPN…KRMKFSALTK (141 aa). Positions 7 and 107 each coordinate Mg(2+). Positions 156–947 constitute a Topo IA-type catalytic domain; that stretch reads NFGMANAGIA…EAKIRLTKIL (792 aa). An interaction with DNA region spans residues 196-201; sequence STGRVQ. In terms of domain architecture, DOD-type homing endonuclease spans 482–591; that stretch reads LIGYLAGKGG…IKVYLQLLGI (110 aa). Catalysis depends on tyrosine 690, which acts as the O-(5'-phospho-DNA)-tyrosine intermediate. The segment at 978–1006 adopts a C4-type 1 zinc-finger fold; sequence CPKCGGDLIVKYNEKTGKRFVGCSNWPKC. A C4-type 2; atypical zinc finger spans residues 1025 to 1050; sequence CCNGAPVVIIREKDGREWEICLDMNC.

The protein belongs to the type IA topoisomerase family. Monomer. Mg(2+) is required as a cofactor. In terms of processing, this protein undergoes a protein self splicing that involves a post-translational excision of the intervening region (intein) followed by peptide ligation.

It catalyses the reaction ATP-independent breakage of single-stranded DNA, followed by passage and rejoining.. Functionally, releases the supercoiling and torsional tension of DNA, which is introduced during the DNA replication and transcription, by transiently cleaving and rejoining one strand of the DNA duplex. Introduces a single-strand break via transesterification at a target site in duplex DNA. The scissile phosphodiester is attacked by the catalytic tyrosine of the enzyme, resulting in the formation of a DNA-(5'-phosphotyrosyl)-enzyme intermediate and the expulsion of a 3'-OH DNA strand. The free DNA strand then undergoes passage around the unbroken strand, thus removing DNA supercoils. Finally, in the religation step, the DNA 3'-OH attacks the covalent intermediate to expel the active-site tyrosine and restore the DNA phosphodiester backbone. This Pyrococcus furiosus (strain ATCC 43587 / DSM 3638 / JCM 8422 / Vc1) protein is DNA topoisomerase 1 (topA).